A 553-amino-acid polypeptide reads, in one-letter code: MSTSRLQQQFIRLWQRYNGQSTETTLQALAEVLNCSRRHVRSLLGKMQHAGWLDWQAEAGRGKRSQLIFLRSGLALQQQRAEELLEQDHIDQLVQLVGDKKAVRQMLLSQLGRSFRQGKHILRVLYYRPLENLLPGTALRRSETHMVRQIFNGLTRINEENGELEPDLSHHWQAITPLHWRFYLRPAIHFHHGRELEMSDVISSLTRLIPQPLFSHIAEVRSPTPYVIDVYLHSPDHWLPWLLGSVHAMILPQEWETQPDFHRQPIGTGPYSVIRNHHSQLKIQAFDNYFGFRALIDEVNIWVLPELSEELVYSGVQLQADDTGKNELESRLEEGCYFLLFDQRSPQACTPEIRRWLCELITPIALLSHADPFYQRYWSPAYGMLPRWHHNRLTTQEPKPEGLNELTLTFYSEHSEFDAISQTLTQLLAAQGVTLKIQVLDYTRWYQGDAQSDIWLGSANFYLPLEFSLFATLYEMPLLQHCLSEELHQDIESWRNNTLLMADWSQRLVSQHQFHPLFHHWLELYGQHSMRGVRMNTLGWFDFKSAWFTPPEA.

The 113-residue stretch at 1–113 (MSTSRLQQQF…RQMLLSQLGR (113 aa)) folds into the HTH marR-type domain. The segment at residues 26–49 (LQALAEVLNCSRRHVRSLLGKMQH) is a DNA-binding region (H-T-H motif). The interval 163–494 (ELEPDLSHHW…EELHQDIESW (332 aa)) is solute-binding.

Functionally, activates the small RNA gene sgrS under glucose-phosphate stress conditions as well as yfdZ. Represses its own transcription under both stress and non-stress conditions. Might act as a sensor of the intracellular accumulation of phosphoglucose by binding these molecules in its C-terminal solute-binding domain. In Yersinia pseudotuberculosis serotype I (strain IP32953), this protein is HTH-type transcriptional regulator SgrR.